Reading from the N-terminus, the 291-residue chain is NAD kinase (291 aa).

Residue D73 is the Proton acceptor of the active site. NAD(+)-binding positions include 73-74, 147-148, R175, D177, 188-193, A212, and Q246; these read DG, ND, and TAYALS.

Belongs to the NAD kinase family. It depends on a divalent metal cation as a cofactor.

It localises to the cytoplasm. It carries out the reaction NAD(+) + ATP = ADP + NADP(+) + H(+). Functionally, involved in the regulation of the intracellular balance of NAD and NADP, and is a key enzyme in the biosynthesis of NADP. Catalyzes specifically the phosphorylation on 2'-hydroxyl of the adenosine moiety of NAD to yield NADP. The protein is NAD kinase of Polaromonas sp. (strain JS666 / ATCC BAA-500).